Consider the following 57-residue polypeptide: uncharacterized protein (57 aa).

Positions 34–57 (QGKRGETEGQIEISRKAGHPAPAF) are disordered.

This is an uncharacterized protein from Saccharomyces cerevisiae (strain ATCC 204508 / S288c) (Baker's yeast).